Here is a 70-residue protein sequence, read N- to C-terminus: Translation initiation factor IF-1 (70 aa).

Positions 1–70 (MKNDKLFLTG…LKLGRITQRK (70 aa)) constitute an S1-like domain.

Belongs to the IF-1 family. In terms of assembly, component of the 30S ribosomal translation pre-initiation complex which assembles on the 30S ribosome in the order IF-2 and IF-3, IF-1 and N-formylmethionyl-tRNA(fMet); mRNA recruitment can occur at any time during PIC assembly.

It is found in the cytoplasm. Functionally, one of the essential components for the initiation of protein synthesis. Stabilizes the binding of IF-2 and IF-3 on the 30S subunit to which N-formylmethionyl-tRNA(fMet) subsequently binds. Helps modulate mRNA selection, yielding the 30S pre-initiation complex (PIC). Upon addition of the 50S ribosomal subunit IF-1, IF-2 and IF-3 are released leaving the mature 70S translation initiation complex. This is Translation initiation factor IF-1 from Mycoplasma genitalium (strain ATCC 33530 / DSM 19775 / NCTC 10195 / G37) (Mycoplasmoides genitalium).